A 293-amino-acid chain; its full sequence is Glycine--tRNA ligase alpha subunit (293 aa).

Belongs to the class-II aminoacyl-tRNA synthetase family. In terms of assembly, tetramer of two alpha and two beta subunits.

The protein localises to the cytoplasm. It carries out the reaction tRNA(Gly) + glycine + ATP = glycyl-tRNA(Gly) + AMP + diphosphate. The sequence is that of Glycine--tRNA ligase alpha subunit from Picosynechococcus sp. (strain ATCC 27264 / PCC 7002 / PR-6) (Agmenellum quadruplicatum).